The following is a 294-amino-acid chain: Type 4 apparatus protein DotZ (294 aa).

The T4BSS is a complex nanomachine composed of several subcomplexes. This subunit is part of the Type IV Coupling Complex (T4CC), a subcomplex composed of the DotLMNYZ core and the IcmSW-LvgA adapter subunits, linked by the C-terminal tail of DotL. Six DotLMNYZ hetero-pentameric units may assemble into a hexameric nanomachine, forming an inner membrane channel for effectors to pass through. Makes significant contact with DotN and DotY, but engages weakly with DotM and DotL. DotY and DotZ are co-dependent for the assembly into the T4CC.

The protein resides in the cytoplasm. Its function is as follows. Component of the Dot/Icm type IVB secretion system (T4BSS), which is used to inject bacterial effector proteins into eukaryotic host cells. Part of a subcomplex which recruits effector proteins and delivers them to the core transmembrane subcomplex. DotY and DotZ play a role in effector translocation, but are not essential and do not influence the stability of the subcomplex main components. The DotY/DotZ main function is to optimize secretion by modulating the delivery trajectory of the IcmSW module and the localization of the machinery to the poles. This is Type 4 apparatus protein DotZ from Legionella pneumophila subsp. pneumophila (strain Philadelphia 1 / ATCC 33152 / DSM 7513).